An 807-amino-acid chain; its full sequence is Potassium transporter 9 (807 aa).

Residues 1–59 (MAERVEASSVPEGENTIEEREVGAMWELEQKLDQPMDEEANKLNNMYREKGLSMLMLLR) are Cytoplasmic-facing. Residues 60 to 80 (LSFQSLGIVYGDLGTSPLYVF) traverse the membrane as a helical segment. Residues 81-96 (YNTFPDGIDDSEDVIG) are Extracellular-facing. Residues 97-117 (ALSLIIYSLLLIPLIKYVFIV) form a helical membrane-spanning segment. The Cytoplasmic segment spans residues 118–185 (CKANDNGQGG…EGKEWRKRAL (68 aa)). The helical transmembrane segment at 186–206 (LVVVLLGTCMMIGDGILTPAI) threads the bilayer. Residues 207 to 225 (SVLSATGGIKVNNPKMSGD) lie on the Extracellular side of the membrane. The helical transmembrane segment at 226–246 (IVVLVAIVILIGLFSMQHYGT) threads the bilayer. Residues 247–248 (DK) are Cytoplasmic-facing. The helical transmembrane segment at 249–269 (VGWLFAPIVLIWFLFIGATGM) threads the bilayer. Topologically, residues 270 to 299 (YNICKYDTSVLKAFSPTYIYLYFKRRGRDG) are extracellular. The chain crosses the membrane as a helical span at residues 300-320 (WISLGGILLSITGTEALYADI). Over 321–322 (AY) the chain is Cytoplasmic. A helical transmembrane segment spans residues 323 to 343 (FPLLAIQLAFTFFVFPCLLLA). At 344-369 (YCGQAAYLVIHKEHYQDAFYASIPDS) the chain is on the extracellular side. Residues 370-390 (VYWPMFIVATGAAIVGSQATI) form a helical membrane-spanning segment. Residues 391–417 (SGTYSIVKQAVAHGCFPRVKIVHTSKK) are Cytoplasmic-facing. Residues 418-438 (FLGQIYCPDINWILMLGCIAV) form a helical membrane-spanning segment. Residues 439 to 454 (TASFKKQSQIGNAYGT) are Extracellular-facing. Residues 455–475 (AVVLVMLVTTLLMVLIMLLVW) traverse the membrane as a helical segment. Residues 476–481 (HCHWIL) are Cytoplasmic-facing. The chain crosses the membrane as a helical span at residues 482 to 502 (VLIFTFLSFFVELSYFSAVIF). The Extracellular portion of the chain corresponds to 503 to 507 (KIDEG). The helical transmembrane segment at 508 to 528 (GWVPLIIAAISLLVMSVWHYA) threads the bilayer. Residues 529–807 (TVKKYEFEMH…LLNVGQVFYV (279 aa)) lie on the Cytoplasmic side of the membrane.

The protein belongs to the HAK/KUP transporter (TC 2.A.72.3) family.

It is found in the cell membrane. Putative potassium transporter. The protein is Potassium transporter 9 (POT9) of Arabidopsis thaliana (Mouse-ear cress).